The chain runs to 296 residues: MANLNKRPDWIKVKAPNSVEYYNTKDLIKNLRLNTVCEEAACPNIGECWSKKHATMMILGSVCTRACRFCNVKTGRPDLLDPHEPQRLAEAVQKLNLKHVVITSVDRDDLEDGGALHFAECINEIRKSSPNTTVEILTPDFLRKEGAAEIIAHSKPDVFNHNVETVPSLYKTIRPGARYYNSLSLLHSIKKLSSEIFTKSGMMVGLGEKISEVIQVMDDLREAKVDFLTIGQYLQPTKDHAEVAKYVTPEEFKYLERVARTKGFLMVSASPLTRSSYHADEDFQKLKQNYRQSLVS.

7 residues coordinate [4Fe-4S] cluster: Cys37, Cys42, Cys48, Cys63, Cys67, Cys70, and Ser276. The Radical SAM core domain maps to 49–265 (WSKKHATMMI…ERVARTKGFL (217 aa)).

This sequence belongs to the radical SAM superfamily. Lipoyl synthase family. [4Fe-4S] cluster serves as cofactor.

The protein localises to the cytoplasm. It catalyses the reaction [[Fe-S] cluster scaffold protein carrying a second [4Fe-4S](2+) cluster] + N(6)-octanoyl-L-lysyl-[protein] + 2 oxidized [2Fe-2S]-[ferredoxin] + 2 S-adenosyl-L-methionine + 4 H(+) = [[Fe-S] cluster scaffold protein] + N(6)-[(R)-dihydrolipoyl]-L-lysyl-[protein] + 4 Fe(3+) + 2 hydrogen sulfide + 2 5'-deoxyadenosine + 2 L-methionine + 2 reduced [2Fe-2S]-[ferredoxin]. It participates in protein modification; protein lipoylation via endogenous pathway; protein N(6)-(lipoyl)lysine from octanoyl-[acyl-carrier-protein]: step 2/2. Functionally, catalyzes the radical-mediated insertion of two sulfur atoms into the C-6 and C-8 positions of the octanoyl moiety bound to the lipoyl domains of lipoate-dependent enzymes, thereby converting the octanoylated domains into lipoylated derivatives. This Rickettsia canadensis (strain McKiel) protein is Lipoyl synthase.